The primary structure comprises 326 residues: Phenylserine dehydratase (326 aa).

Monomer. The cofactor is pyridoxal 5'-phosphate.

It carries out the reaction L-threo-3-phenylserine = 3-phenylpyruvate + NH4(+). With respect to regulation, inhibited by phenylhydrazine, hydroxylamine, p-chloromercuribenzoate, and HgCl(2). The polypeptide is Phenylserine dehydratase (Ralstonia pickettii (Burkholderia pickettii)).